An 827-amino-acid polypeptide reads, in one-letter code: Cell surface glycoprotein (827 aa).

The first 34 residues, 1–34, serve as a signal peptide directing secretion; it reads MTKLKDQTRAILLATLMVTSVFAGAIAFTGSAAA. Asparagine 47 is a glycosylation site (N-linked (Glc...) asparagine). Positions 73–102 are enriched in polar residues; that stretch reads PLLTGTAGNSEGVSLDLSSPIPQTTENQPL. The disordered stretch occupies residues 73–111; the sequence is PLLTGTAGNSEGVSLDLSSPIPQTTENQPLGTYDVDGSG. N-linked (Glc...) asparagine glycans are attached at residues asparagine 117, asparagine 308, asparagine 313, asparagine 532, and asparagine 766. The interval 755-804 is disordered; sequence SEREDTTTSSDNATDTTTTTDGPTETTTTAEPTETTEEPTEETTTSSNTP. Over residues 761–787 the composition is skewed to low complexity; sequence TTSSDNATDTTTTTDGPTETTTTAEPT. A PGF sorting signal motif is present at residues 804-806; the sequence is PGF. A helical transmembrane segment spans residues 804–823; that stretch reads PGFGIAVALVALVGAALLAL.

This sequence belongs to the halobacterial S-layer protein family. In terms of processing, O-glycosylated on 4 to 6 threonine residues; glycans consist of Glc-Gal disaccharides. The N-terminus is not blocked. Post-translationally, cleaved by the archaeosortase ArtA at the C-terminus, with removal of a short hydrophobic segment. In terms of processing, lipidation: Following protein translocation across the membrane, the protein is modified by a derivative of mevalonic acid. Lipid modification is ArtA-dependent and requires the conserved C-terminal PGF motif. Asn-47 and Asn-117 are glycosylated by a pentasaccharide comprising a hexose, 2 hexuronic acids, a methyl ester of a hexuronic acid and mannose. The pentasaccharide is produced in 2 steps: first, a tetrasaccharide is built on dolichol-P and then transferred to the S-layer glycoprotein. Then, the mannose fifth sugar is attached to a distinct molecule of dolichol-P and is transferred to the protein already carrying the tetrasaccharide. The pentasaccharide on Asn-47 was initially thought to contain mannose, galactose, glucose and idose with a relative ratio of 1/3/3/0.2. However, it was later shown that it is not the case. Under low-salt conditions (1.75 M instead of 3.4 M), a tetrasaccharide consisting of a sulfated hexose, 2 hexoses and rhamnose is attached to Asn-532.

Its subcellular location is the secreted. It is found in the cell wall. The protein localises to the S-layer. The protein resides in the cell membrane. Functionally, S-layer protein. The S-layer is a paracrystalline mono-layered assembly of proteins which coat the surface of the cell. This chain is Cell surface glycoprotein (csg), found in Haloferax volcanii (strain ATCC 29605 / DSM 3757 / JCM 8879 / NBRC 14742 / NCIMB 2012 / VKM B-1768 / DS2) (Halobacterium volcanii).